The primary structure comprises 405 residues: Probable tRNA sulfurtransferase (405 aa).

The THUMP domain maps to 60 to 165 (DKVMGRLKLV…LNGIFLSSET (106 aa)). Residues 183–184 (ML), 208–209 (HF), Arg265, Gly287, and Gln296 each bind ATP.

Belongs to the ThiI family.

Its subcellular location is the cytoplasm. The enzyme catalyses [ThiI sulfur-carrier protein]-S-sulfanyl-L-cysteine + a uridine in tRNA + 2 reduced [2Fe-2S]-[ferredoxin] + ATP + H(+) = [ThiI sulfur-carrier protein]-L-cysteine + a 4-thiouridine in tRNA + 2 oxidized [2Fe-2S]-[ferredoxin] + AMP + diphosphate. It carries out the reaction [ThiS sulfur-carrier protein]-C-terminal Gly-Gly-AMP + S-sulfanyl-L-cysteinyl-[cysteine desulfurase] + AH2 = [ThiS sulfur-carrier protein]-C-terminal-Gly-aminoethanethioate + L-cysteinyl-[cysteine desulfurase] + A + AMP + 2 H(+). The protein operates within cofactor biosynthesis; thiamine diphosphate biosynthesis. Its function is as follows. Catalyzes the ATP-dependent transfer of a sulfur to tRNA to produce 4-thiouridine in position 8 of tRNAs, which functions as a near-UV photosensor. Also catalyzes the transfer of sulfur to the sulfur carrier protein ThiS, forming ThiS-thiocarboxylate. This is a step in the synthesis of thiazole, in the thiamine biosynthesis pathway. The sulfur is donated as persulfide by IscS. The sequence is that of Probable tRNA sulfurtransferase from Lactiplantibacillus plantarum (strain ATCC BAA-793 / NCIMB 8826 / WCFS1) (Lactobacillus plantarum).